A 123-amino-acid chain; its full sequence is Thioredoxin domain-containing protein 17 (123 aa).

One can recognise a Thioredoxin domain in the interval 41–123; the sequence is SWCPDCVTAE…DLVRMMFTED (83 aa). Residues C43 and C46 each act as nucleophile in the active site. A disulfide bridge links C43 with C46.

This sequence belongs to the thioredoxin family. As to expression, predominantly expressed in liver, brain and muscle. Also expressed in kidney, intestine, skin, stomach, gill and head kidney.

Its subcellular location is the cytoplasm. In terms of biological role, disulfide reductase. May participate in various redox reactions through the reversible oxidation of its active center dithiol to a disulfide and catalyze dithiol-disulfide exchange reactions. Has peroxidase activity and may contribute to the elimination of cellular hydrogen peroxide. May function as an antioxidant involved in response to viral infection. The protein is Thioredoxin domain-containing protein 17 of Epinephelus coioides (Orange-spotted grouper).